Here is a 395-residue protein sequence, read N- to C-terminus: Elongation factor Tu (395 aa).

Positions 10–205 (KVHMNVGTIG…AMDSYFEDPV (196 aa)) constitute a tr-type G domain. Residues 19–26 (GHVDHGKT) are G1. Position 19-26 (19-26 (GHVDHGKT)) interacts with GTP. T26 lines the Mg(2+) pocket. The G2 stretch occupies residues 60–64 (GITIN). Positions 81–84 (DCPG) are G3. GTP contacts are provided by residues 81-85 (DCPGH) and 136-139 (NKVD). Residues 136–139 (NKVD) form a G4 region. Residues 173–175 (SAF) form a G5 region.

This sequence belongs to the TRAFAC class translation factor GTPase superfamily. Classic translation factor GTPase family. EF-Tu/EF-1A subfamily. Monomer.

It is found in the cytoplasm. It carries out the reaction GTP + H2O = GDP + phosphate + H(+). GTP hydrolase that promotes the GTP-dependent binding of aminoacyl-tRNA to the A-site of ribosomes during protein biosynthesis. The chain is Elongation factor Tu from Treponema pallidum (strain Nichols).